A 350-amino-acid polypeptide reads, in one-letter code: Glyceraldehyde-3-phosphate dehydrogenase (350 aa).

NAD(+)-binding positions include 13-14 (TI) and Gly118. 147–149 (SCN) provides a ligand contact to D-glyceraldehyde 3-phosphate. Cys148 acts as the Nucleophile in catalysis. Arg176 provides a ligand contact to NAD(+). 202–203 (HG) lines the D-glyceraldehyde 3-phosphate pocket. Gln309 contacts NAD(+). Positions 327 to 350 (LEEDPEASMDATDSALGVLNSPPL) are disordered.

This sequence belongs to the glyceraldehyde-3-phosphate dehydrogenase family. In terms of assembly, homotetramer.

Its subcellular location is the cytoplasm. It catalyses the reaction D-glyceraldehyde 3-phosphate + phosphate + NADP(+) = (2R)-3-phospho-glyceroyl phosphate + NADPH + H(+). The catalysed reaction is D-glyceraldehyde 3-phosphate + phosphate + NAD(+) = (2R)-3-phospho-glyceroyl phosphate + NADH + H(+). It participates in carbohydrate degradation; glycolysis; pyruvate from D-glyceraldehyde 3-phosphate: step 1/5. This is Glyceraldehyde-3-phosphate dehydrogenase from Methanopyrus kandleri (strain AV19 / DSM 6324 / JCM 9639 / NBRC 100938).